Consider the following 212-residue polypeptide: Ion-translocating oxidoreductase complex subunit G (212 aa).

Residues 9–29 form a helical membrane-spanning segment; that stretch reads GFLLALFALICTGLVAAVNQQ. Residue threonine 176 is modified to FMN phosphoryl threonine.

This sequence belongs to the RnfG family. As to quaternary structure, the complex is composed of six subunits: RnfA, RnfB, RnfC, RnfD, RnfE and RnfG. Requires FMN as cofactor.

It localises to the cell inner membrane. Part of a membrane-bound complex that couples electron transfer with translocation of ions across the membrane. The sequence is that of Ion-translocating oxidoreductase complex subunit G from Shewanella baltica (strain OS223).